The chain runs to 95 residues: Probable FAD-linked sulfhydryl oxidase OPG072 (95 aa).

Residues 1–8 (MNPKHWGR) are Intravirion-facing. Residues 1–95 (MNPKHWGRAA…AIDVSKVKPL (95 aa)) enclose the ERV/ALR sulfhydryl oxidase domain. A helical transmembrane segment spans residues 9-25 (AAWTIIFIVLSQAGLDG). Over 26-95 (NIEACKRKLY…AIDVSKVKPL (70 aa)) the chain is Virion surface. An intrachain disulfide couples C43 to C46.

Belongs to the orthopoxvirus OPG072 family. Interacts with OPG128; this interaction involves formation of a transient disulfide-bonded intermediate, allowing disulfide bond transfer. FAD serves as cofactor.

It localises to the virion membrane. The protein localises to the host cytoplasm. It carries out the reaction 2 R'C(R)SH + O2 = R'C(R)S-S(R)CR' + H2O2. FAD-dependent sulfhydryl oxidase that catalyzes disulfide bond formation. The complete pathway for formation of disulfide bonds in intracellular virion membrane proteins sequentially involves thiol-disulfide transfer between OPG072, OPG128 and OPG088. This chain is Probable FAD-linked sulfhydryl oxidase OPG072 (OPG072), found in Variola virus (isolate Human/India/Ind3/1967) (VARV).